The primary structure comprises 189 residues: Peptide deformylase (189 aa).

The Fe cation site is built by Cys98 and His140. Glu141 is a catalytic residue. Position 144 (His144) interacts with Fe cation.

This sequence belongs to the polypeptide deformylase family. The cofactor is Fe(2+).

The catalysed reaction is N-terminal N-formyl-L-methionyl-[peptide] + H2O = N-terminal L-methionyl-[peptide] + formate. Its function is as follows. Removes the formyl group from the N-terminal Met of newly synthesized proteins. Requires at least a dipeptide for an efficient rate of reaction. N-terminal L-methionine is a prerequisite for activity but the enzyme has broad specificity at other positions. The polypeptide is Peptide deformylase (Porphyromonas gingivalis (strain ATCC 33277 / DSM 20709 / CIP 103683 / JCM 12257 / NCTC 11834 / 2561)).